The chain runs to 239 residues: Proteasome activator complex subunit 2 (239 aa).

N-acetylalanine is present on A2. Residue S10 is modified to Phosphoserine.

It belongs to the PA28 family. Heterodimer of PSME1 and PSME2, which forms a hexameric ring.

In terms of biological role, implicated in immunoproteasome assembly and required for efficient antigen processing. The PA28 activator complex enhances the generation of class I binding peptides by altering the cleavage pattern of the proteasome. The chain is Proteasome activator complex subunit 2 (PSME2) from Homo sapiens (Human).